The following is a 236-amino-acid chain: Probable transcriptional regulatory protein Suden_1389 (236 aa).

This sequence belongs to the TACO1 family.

The protein resides in the cytoplasm. In Sulfurimonas denitrificans (strain ATCC 33889 / DSM 1251) (Thiomicrospira denitrificans (strain ATCC 33889 / DSM 1251)), this protein is Probable transcriptional regulatory protein Suden_1389.